The chain runs to 117 residues: Small ribosomal subunit protein bS6m (117 aa).

It belongs to the bacterial ribosomal protein bS6 family. Component of the mitochondrial small ribosomal subunit (mt-SSU). Mature N.crassa 74S mitochondrial ribosomes consist of a small (37S) and a large (54S) subunit. The 37S small subunit contains a 16S ribosomal RNA (16S mt-rRNA) and 32 different proteins. The 54S large subunit contains a 23S rRNA (23S mt-rRNA) and 42 different proteins.

It localises to the mitochondrion. Component of the mitochondrial ribosome (mitoribosome), a dedicated translation machinery responsible for the synthesis of mitochondrial genome-encoded proteins, including at least some of the essential transmembrane subunits of the mitochondrial respiratory chain. The mitoribosomes are attached to the mitochondrial inner membrane and translation products are cotranslationally integrated into the membrane. The polypeptide is Small ribosomal subunit protein bS6m (mrp17) (Neurospora crassa (strain ATCC 24698 / 74-OR23-1A / CBS 708.71 / DSM 1257 / FGSC 987)).